The primary structure comprises 450 residues: Coiled-coil domain-containing protein 149-A (450 aa).

Coiled coils occupy residues 1–197 (MANQ…DRRK) and 259–286 (IQHQ…LEIS). The segment at 290 to 358 (SLPDDRTGRG…NGQVGTQLKE (69 aa)) is disordered. Polar residues predominate over residues 343 to 354 (PSGTRTNGQVGT).

This sequence belongs to the CCDC149 family.

This is Coiled-coil domain-containing protein 149-A (ccdc149a) from Danio rerio (Zebrafish).